Consider the following 1017-residue polypeptide: uncharacterized protein (1017 aa).

The segment at residues 1 to 34 is a signal peptide (tat-type signal); that stretch reads MGNLTMSRRTFVKTAAITGAAAAAFGASTHTALA. The region spanning 45-103 is the 4Fe-4S Mo/W bis-MGD-type domain; the sequence is DTVAVKTCCRGCGKMECGVKVIVQNGRAIRVEGDEGAFQSMGNCCTKSQSSIQAAYHPD. Residues cysteine 53, cysteine 56, cysteine 61, and cysteine 89 each contribute to the [4Fe-4S] cluster site. Catalysis depends on lysine 91, which acts as the Electron donor/acceptor.

It belongs to the prokaryotic molybdopterin-containing oxidoreductase family. [4Fe-4S] cluster serves as cofactor. Mo-bis(molybdopterin guanine dinucleotide) is required as a cofactor. Predicted to be exported by the Tat system. The position of the signal peptide cleavage has not been experimentally proven.

This is an uncharacterized protein from Eggerthella lenta (strain ATCC 25559 / DSM 2243 / CCUG 17323 / JCM 9979 / KCTC 3265 / NCTC 11813 / VPI 0255 / 1899 B) (Eubacterium lentum).